The following is a 187-amino-acid chain: Threonylcarbamoyl-AMP synthase (187 aa).

The YrdC-like domain maps to 4–187 (ILTLDNAVAT…DARSGQILRD (184 aa)).

The protein belongs to the SUA5 family. TsaC subfamily.

It is found in the cytoplasm. The enzyme catalyses L-threonine + hydrogencarbonate + ATP = L-threonylcarbamoyladenylate + diphosphate + H2O. Its function is as follows. Required for the formation of a threonylcarbamoyl group on adenosine at position 37 (t(6)A37) in tRNAs that read codons beginning with adenine. Catalyzes the conversion of L-threonine, HCO(3)(-)/CO(2) and ATP to give threonylcarbamoyl-AMP (TC-AMP) as the acyladenylate intermediate, with the release of diphosphate. This Xanthomonas oryzae pv. oryzae (strain MAFF 311018) protein is Threonylcarbamoyl-AMP synthase.